The following is a 1179-amino-acid chain: Integrin alpha-E (1179 aa).

A signal peptide spans 1–18 (MWLFHTLLCIASLALLAA). At 19 to 1124 (FNVDVARPWL…VFLKDEKYHS (1106 aa)) the chain is on the extracellular side. FG-GAP repeat units lie at residues 22–79 (DVAR…EILC) and 80–138 (HPVE…PQAQ). Residue Asn-49 is glycosylated (N-linked (GlcNAc...) asparagine). 2 disulfides stabilise this stretch: Cys-70–Cys-79 and Cys-126–Cys-159. Residues 145-199 (ENLLDPDARVDTGDCYSNKEGGGEDDVNTARQRRALEKEEEEDKEEEEDEEEEEA) form an X-domain (extra domain) region. Residues 158-200 (DCYSNKEGGGEDDVNTARQRRALEKEEEEDKEEEEDEEEEEAG) are disordered. Acidic residues predominate over residues 182–200 (KEEEEDKEEEEDEEEEEAG). Residues 200-389 (GTEIAIILDG…SKLRYNIISM (190 aa)) form the VWFA domain. Residues Asn-271 and Asn-321 are each glycosylated (N-linked (GlcNAc...) asparagine). Residues 390 to 442 (EGTVGDALHYQLAQIGFSAQILDERQVLLGAVGAFDWSGGALLYDTRSRRGRF) form an FG-GAP 3 repeat. Asn-444 carries an N-linked (GlcNAc...) asparagine glycan. 4 FG-GAP repeats span residues 447 to 499 (AAAA…GREA), 500 to 560 (SFLP…DGSF), 563 to 627 (ARIL…GLSA), and 631 to 691 (QRIR…FTPS). Residues Asp-522, Asp-524, Asp-526, Asp-530, Asp-586, Ser-588, Asp-590, Asp-594, Asp-654, Ser-656, Asp-658, and Asp-662 each contribute to the Ca(2+) site. Cysteines 706 and 762 form a disulfide. 2 N-linked (GlcNAc...) asparagine glycosylation sites follow: Asn-726 and Asn-782. Cys-823 and Cys-829 are joined by a disulfide. N-linked (GlcNAc...) asparagine glycosylation occurs at Asn-857. Cys-893 and Cys-907 are oxidised to a cystine. N-linked (GlcNAc...) asparagine glycans are attached at residues Asn-934 and Asn-954. Intrachain disulfides connect Cys-1008/Cys-1033 and Cys-1041/Cys-1057. Residues Asn-1065 and Asn-1096 are each glycosylated (N-linked (GlcNAc...) asparagine). Residues 1125–1147 (LPIIIKGSVGGLLVLIVILVILF) form a helical membrane-spanning segment. Over 1148–1179 (KCGFFKRKYQQLNLESIRKAQLKSENLLEEEN) the chain is Cytoplasmic. The GFFKR motif motif lies at 1150–1154 (GFFKR).

The protein belongs to the integrin alpha chain family. In terms of assembly, heterodimer of an alpha and a beta subunit. The alpha subunit is composed of a heavy and a light chains linked by a disulfide bond. Alpha-E associates with beta-7. Expressed on a subclass of T-lymphocytes known as intra-epithelial lymphocytes which are located between mucosal epithelial cells.

Its subcellular location is the membrane. In terms of biological role, integrin alpha-E/beta-7 is a receptor for E-cadherin. It mediates adhesion of intra-epithelial T-lymphocytes to epithelial cell monolayers. The protein is Integrin alpha-E (ITGAE) of Homo sapiens (Human).